The sequence spans 223 residues: MKSAVILLPGLNRNRDMIAALTKITGQAPVTVWQTDTSIPDDVDLILIPGGFSYGDYLRCGAIAARMPVMQAVREKADKGVMVMGVCNGFQILLEAGLLPGALMRNASLKFVCREVKLEVTNANTSFTRGYKPGQIIRCPVAHHDGNYFADAETLKRLEGEGQVVFRYAEGTNPNGSVNDIAGIVNARGNVLGMMPHPENLIEAAHGGDDGRALFAGALGITA.

The region spanning 3-223 (SAVILLPGLN…LFAGALGITA (221 aa)) is the Glutamine amidotransferase type-1 domain. Cys-87 (nucleophile) is an active-site residue. Active-site residues include His-197 and Glu-199.

Part of the FGAM synthase complex composed of 1 PurL, 1 PurQ and 2 PurS subunits.

It is found in the cytoplasm. The catalysed reaction is N(2)-formyl-N(1)-(5-phospho-beta-D-ribosyl)glycinamide + L-glutamine + ATP + H2O = 2-formamido-N(1)-(5-O-phospho-beta-D-ribosyl)acetamidine + L-glutamate + ADP + phosphate + H(+). It catalyses the reaction L-glutamine + H2O = L-glutamate + NH4(+). It functions in the pathway purine metabolism; IMP biosynthesis via de novo pathway; 5-amino-1-(5-phospho-D-ribosyl)imidazole from N(2)-formyl-N(1)-(5-phospho-D-ribosyl)glycinamide: step 1/2. Functionally, part of the phosphoribosylformylglycinamidine synthase complex involved in the purines biosynthetic pathway. Catalyzes the ATP-dependent conversion of formylglycinamide ribonucleotide (FGAR) and glutamine to yield formylglycinamidine ribonucleotide (FGAM) and glutamate. The FGAM synthase complex is composed of three subunits. PurQ produces an ammonia molecule by converting glutamine to glutamate. PurL transfers the ammonia molecule to FGAR to form FGAM in an ATP-dependent manner. PurS interacts with PurQ and PurL and is thought to assist in the transfer of the ammonia molecule from PurQ to PurL. The protein is Phosphoribosylformylglycinamidine synthase subunit PurQ of Brucella abortus biovar 1 (strain 9-941).